The chain runs to 138 residues: UPF0251 protein Dole_1957 (138 aa).

Belongs to the UPF0251 family.

In Desulfosudis oleivorans (strain DSM 6200 / JCM 39069 / Hxd3) (Desulfococcus oleovorans), this protein is UPF0251 protein Dole_1957.